The sequence spans 66 residues: Toxin BomPI (66 aa).

Residues 2 to 64 form the LCN-type CS-alpha/beta domain; the sequence is RDAYIAQPEN…VPIRIEGKCH (63 aa). Disulfide bonds link C12–C63, C16–C36, C22–C46, and C26–C48.

This sequence belongs to the long (4 C-C) scorpion toxin superfamily. Sodium channel inhibitor family. Alpha subfamily. As to expression, expressed by the venom gland.

The protein resides in the secreted. Alpha toxins bind voltage-independently at site-3 of sodium channels (Nav) and inhibit the inactivation of the activated channels, thereby blocking neuronal transmission. In Buthus occitanus mardochei (Moroccan scorpion), this protein is Toxin BomPI.